Consider the following 268-residue polypeptide: Activator of basal transcription 1 (268 aa).

A coiled-coil region spans residues 6-38; it reads KLVEEQKAAMEEEKEVNAEAAEELEEAEEASCN. The RRM domain maps to 47–144; the sequence is GIVYLGHVPP…RKRSPFRYDL (98 aa). Residues 163–193 adopt a coiled-coil conformation; sequence AFERQVRRQRLRAEVAQAKRETDFYLRNVEQ. The tract at residues 200-242 is disordered; sequence ADGDATRPNSSWTFTQRPTEQELRAQKGARPGGRERARLATVQ. Polar residues predominate over residues 206 to 217; it reads RPNSSWTFTQRP.

The protein belongs to the ESF2/ABP1 family. Interacts with IGHMBP2. Interacts with ESF1/ABTAP.

The protein localises to the nucleus. It localises to the nucleolus. In terms of biological role, may be a novel TATA-binding protein (TBP) which can function as a basal transcription activator. Can act as a regulator of basal transcription for class II genes. In Rattus norvegicus (Rat), this protein is Activator of basal transcription 1 (Abt1).